The chain runs to 303 residues: Acetylglutamate kinase (303 aa).

Substrate is bound by residues 76-77, R98, and N199; that span reads GG.

The protein belongs to the acetylglutamate kinase family. ArgB subfamily.

It is found in the cytoplasm. The enzyme catalyses N-acetyl-L-glutamate + ATP = N-acetyl-L-glutamyl 5-phosphate + ADP. It participates in amino-acid biosynthesis; L-arginine biosynthesis; N(2)-acetyl-L-ornithine from L-glutamate: step 2/4. Catalyzes the ATP-dependent phosphorylation of N-acetyl-L-glutamate. This Clavibacter sepedonicus (Clavibacter michiganensis subsp. sepedonicus) protein is Acetylglutamate kinase.